A 669-amino-acid chain; its full sequence is RNA-binding protein 14 (669 aa).

RRM domains are found at residues 1-73 (MKIF…MSRP) and 79-149 (WKIF…LSTK). Glycyl lysine isopeptide (Lys-Gly) (interchain with G-Cter in SUMO2) cross-links involve residues lysine 126, lysine 135, lysine 138, lysine 149, and lysine 153. Disordered stretches follow at residues 147 to 175 (STKG…DTAF) and 193 to 232 (NSTG…PLTA). Serine 161 is modified (phosphoserine). Position 164 is an N6-acetyllysine; alternate (lysine 164). A Glycyl lysine isopeptide (Lys-Gly) (interchain with G-Cter in SUMO2); alternate cross-link involves residue lysine 164. Threonine 206 is modified (phosphothreonine). Residues serine 220, serine 242, serine 244, serine 256, serine 272, and serine 280 each carry the phosphoserine modification. Residues 284 to 303 (PYRGQLASPSSQSAAASSLG) are disordered. Residues 287–303 (GQLASPSSQSAAASSLG) show a composition bias toward low complexity. The segment at 307-354 (GAQPSASALSSYGGQAAAASSLNSYGAQGSSLASYGNQPSSYGAQAAS) is TRBP-interacting domain; interaction with STIL. 4 positions are modified to phosphoserine: serine 520, serine 523, serine 527, and serine 562. The segment at 566–592 (VANANSTPPPYERTRLSPPRASYDDPY) is disordered. Phosphothreonine is present on threonine 572. At serine 582 the chain carries Phosphoserine. Residue lysine 600 forms a Glycyl lysine isopeptide (Lys-Gly) (interchain with G-Cter in SUMO2) linkage. Residues serine 618, serine 620, serine 623, serine 627, serine 643, and serine 649 each carry the phosphoserine modification.

As to quaternary structure, interacts with NCOA6, CITED1 and XRCC5/KU86. Interacts with SS18. Interacts with STIL and interferes with its interaction with CPAP. Interacts with gamma-tubulin. Part of the HDP-RNP complex composed of at least HEXIM1, PRKDC, XRCC5, XRCC6, paraspeckle proteins (SFPQ, NONO, PSPC1, RBM14, and MATR3) and NEAT1 RNA.

The protein resides in the nucleus. The protein localises to the nucleolus. It localises to the cytoplasm. In terms of biological role, may function as a nuclear receptor coactivator, enhancing transcription through other coactivators such as NCOA6 and CITED1. Regulates centriole biogenesis by suppressing the formation of aberrant centriolar protein complexes in the cytoplasm and thus preserving mitotic spindle integrity. Prevents the formation of the STIL-CPAP complex (which can induce the formation of aberrant centriolar protein complexes) by interfering with the interaction of STIL with CPAP. Plays a role in the regulation of DNA virus-mediated innate immune response by assembling into the HDP-RNP complex, a complex that serves as a platform for IRF3 phosphorylation and subsequent innate immune response activation through the cGAS-STING pathway. The sequence is that of RNA-binding protein 14 (RBM14) from Pongo abelii (Sumatran orangutan).